The following is a 302-amino-acid chain: Ornithine carbamoyltransferase (302 aa).

Carbamoyl phosphate is bound by residues 52–55 (STRT), Q79, R103, and 130–133 (HPCQ). L-ornithine is bound by residues N161, D221, and 225–226 (SM). Carbamoyl phosphate-binding positions include 261–262 (CL) and R289.

It belongs to the aspartate/ornithine carbamoyltransferase superfamily. OTCase family.

The protein resides in the cytoplasm. The enzyme catalyses carbamoyl phosphate + L-ornithine = L-citrulline + phosphate + H(+). The protein operates within amino-acid biosynthesis; L-arginine biosynthesis; L-arginine from L-ornithine and carbamoyl phosphate: step 1/3. In terms of biological role, reversibly catalyzes the transfer of the carbamoyl group from carbamoyl phosphate (CP) to the N(epsilon) atom of ornithine (ORN) to produce L-citrulline. The sequence is that of Ornithine carbamoyltransferase from Methanospirillum hungatei JF-1 (strain ATCC 27890 / DSM 864 / NBRC 100397 / JF-1).